The primary structure comprises 152 residues: Small ribosomal subunit protein uS8m (152 aa).

This sequence belongs to the universal ribosomal protein uS8 family.

The protein resides in the mitochondrion. The sequence is that of Small ribosomal subunit protein uS8m (mrps8) from Dictyostelium citrinum (Slime mold).